The chain runs to 438 residues: Putative B3 domain-containing protein Os04g0676650 (438 aa).

Residues 1–11 are compositionally biased toward low complexity; that stretch reads MADARGSSSSS. Disordered regions lie at residues 1 to 30 and 225 to 285; these read MADA…DFVG and SSSH…MNQN. Residues 12–30 are compositionally biased toward gly residues; that stretch reads GDGGGGEGKGGAGHGDFVG. Basic and acidic residues predominate over residues 258–269; the sequence is RRSDMESEKNDD. Positions 272–285 are enriched in polar residues; sequence DQTPVSEPPSMNQN. Residues 302 to 404 constitute a DNA-binding region (TF-B3); that stretch reads LRKELTNSDV…KFVVRGEKAI (103 aa).

It localises to the nucleus. This is Putative B3 domain-containing protein Os04g0676650 from Oryza sativa subsp. japonica (Rice).